The following is a 155-amino-acid chain: Transcriptional regulator MraZ (155 aa).

2 consecutive SpoVT-AbrB domains span residues 7 to 54 (TYEC…PMEE) and 83 to 126 (VKTV…DKDK).

It belongs to the MraZ family. As to quaternary structure, forms oligomers.

The protein resides in the cytoplasm. It localises to the nucleoid. The chain is Transcriptional regulator MraZ from Christiangramia forsetii (strain DSM 17595 / CGMCC 1.15422 / KT0803) (Gramella forsetii).